A 160-amino-acid chain; its full sequence is Probable dihydroneopterin aldolase 3 (160 aa).

Residues Glu59, Phe91, and 110-111 (YE) each bind substrate. The Proton donor/acceptor role is filled by Lys137.

It belongs to the DHNA family. In terms of assembly, homooctamer. Forms a hollow cylinder assembled from two ring-shaped tetramers. As to expression, expressed at very low levels in siliques.

It catalyses the reaction 7,8-dihydroneopterin = 6-hydroxymethyl-7,8-dihydropterin + glycolaldehyde. It participates in cofactor biosynthesis; tetrahydrofolate biosynthesis; 2-amino-4-hydroxy-6-hydroxymethyl-7,8-dihydropteridine diphosphate from 7,8-dihydroneopterin triphosphate: step 3/4. Its function is as follows. Catalyzes the conversion of 7,8-dihydroneopterin into 6-hydroxymethyl-7,8-dihydropterin, a biosynthetic precursor of the vitamin tetrahydrofolate. Can use L-threo-dihydroneopterin and D-erythro-dihydroneopterin as substrates for the formation of 6-hydroxymethyldihydropterin, but it can also catalyze the epimerization of carbon 2' of dihydroneopterin and dihydromonapterin. The polypeptide is Probable dihydroneopterin aldolase 3 (Arabidopsis thaliana (Mouse-ear cress)).